The sequence spans 798 residues: Protocadherin beta-13 (798 aa).

Residues 1 to 28 form the signal peptide; sequence MEASGKLICRQRQVLFSFLLLGLSLAGA. Residues 29 to 690 lie on the Extracellular side of the membrane; the sequence is AEPRSYSVVE…AQADLLTVYL (662 aa). Cadherin domains lie at 36-134, 139-243, 248-348, 353-451, and 456-561; these read VVEE…SPVF, MLVK…APEF, YRVQ…APEV, FTSP…APAF, and YTLF…SPFV. N-linked (GlcNAc...) asparagine glycans are attached at residues Asn418 and Asn436. An N-linked (GlcNAc...) asparagine glycan is attached at Asn567. In terms of domain architecture, Cadherin 6 spans 568–671; sequence GSAPCTELVP…LVDGFSQPYL (104 aa). A helical transmembrane segment spans residues 691–711; that stretch reads VVALASVSSLFLFSVLLFVAV. Over 712–798 the chain is Cytoplasmic; the sequence is RLCRRSRAAS…FPNNFGFNIQ (87 aa).

It localises to the cell membrane. Potential calcium-dependent cell-adhesion protein. May be involved in the establishment and maintenance of specific neuronal connections in the brain. This is Protocadherin beta-13 (PCDHB13) from Homo sapiens (Human).